We begin with the raw amino-acid sequence, 334 residues long: Phosphoribosylformylglycinamidine cyclo-ligase (334 aa).

The protein belongs to the AIR synthase family.

The protein localises to the cytoplasm. The catalysed reaction is 2-formamido-N(1)-(5-O-phospho-beta-D-ribosyl)acetamidine + ATP = 5-amino-1-(5-phospho-beta-D-ribosyl)imidazole + ADP + phosphate + H(+). It participates in purine metabolism; IMP biosynthesis via de novo pathway; 5-amino-1-(5-phospho-D-ribosyl)imidazole from N(2)-formyl-N(1)-(5-phospho-D-ribosyl)glycinamide: step 2/2. The protein is Phosphoribosylformylglycinamidine cyclo-ligase of Pyrococcus horikoshii (strain ATCC 700860 / DSM 12428 / JCM 9974 / NBRC 100139 / OT-3).